A 205-amino-acid chain; its full sequence is dTTP/UTP pyrophosphatase (205 aa).

The Proton acceptor role is filled by Asp71.

Belongs to the Maf family. YhdE subfamily. The cofactor is a divalent metal cation.

It localises to the cytoplasm. It carries out the reaction dTTP + H2O = dTMP + diphosphate + H(+). It catalyses the reaction UTP + H2O = UMP + diphosphate + H(+). Nucleoside triphosphate pyrophosphatase that hydrolyzes dTTP and UTP. May have a dual role in cell division arrest and in preventing the incorporation of modified nucleotides into cellular nucleic acids. This is dTTP/UTP pyrophosphatase from Syntrophus aciditrophicus (strain SB).